The chain runs to 452 residues: Tol-Pal system protein TolB (452 aa).

Positions 1–31 (MCGVRRGMGVLLLFCAVALCAMPFVVRSVWG) are cleaved as a signal peptide.

The protein belongs to the TolB family. The Tol-Pal system is composed of five core proteins: the inner membrane proteins TolA, TolQ and TolR, the periplasmic protein TolB and the outer membrane protein Pal. They form a network linking the inner and outer membranes and the peptidoglycan layer.

It localises to the periplasm. Functionally, part of the Tol-Pal system, which plays a role in outer membrane invagination during cell division and is important for maintaining outer membrane integrity. This is Tol-Pal system protein TolB from Syntrophus aciditrophicus (strain SB).